The following is a 118-amino-acid chain: Large ribosomal subunit protein uL18 (118 aa).

The protein belongs to the universal ribosomal protein uL18 family. Part of the 50S ribosomal subunit; part of the 5S rRNA/L5/L18/L25 subcomplex. Contacts the 5S and 23S rRNAs.

In terms of biological role, this is one of the proteins that bind and probably mediate the attachment of the 5S RNA into the large ribosomal subunit, where it forms part of the central protuberance. This is Large ribosomal subunit protein uL18 from Caulobacter sp. (strain K31).